The following is a 462-amino-acid chain: MLVKSCIFLSFLAIAAYGQAHLKYTKEMNDPEYVQQNVHHQGHGHAHGGHGHAHDADGGCPYAKAAAAEAATAAAHDHGHAHDHDHGHAHDHGHAHDHHGHSHDEEEDHHHGHAHDHHGHSHEDHGHSHGAESAKQVGDEYQYTGFLSFLNDAKTRLWVYAISATLLISAAPCFILMFIPIQANTSESGPLLKVLLAFGSGGLLGDAFLHLIPHATPAGDGHGHSHSHGHSHGGGGHSHGAHDMSVGGWVLGGIIAFLTVEKLVRILRGEDGHGHSHGHSHGGEKKETKEKDSKDKVAKKEEKPEKDEQSIKVTAYLNLAADFTHNFTDGLAIGASFIAGTTVGIVTMITVLVHEVPHEIGDFAILIQSGYSKKKAMLIQLVTALGALSGCVISLFSADADALADAAASSWVLPFTAGGFIYIATVSVIPELLENSSFFQTVKEIFAILTGIFLMYLIAIYE.

A helical transmembrane segment spans residues 2 to 22; the sequence is LVKSCIFLSFLAIAAYGQAHL. Positions 39 to 134 are disordered; the sequence is HHQGHGHAHG…HGHSHGAESA (96 aa). Over residues 40-51 the composition is skewed to basic residues; sequence HQGHGHAHGGHG. The span at 65-74 shows a compositional bias: low complexity; sequence AAAAEAATAA. The span at 75–94 shows a compositional bias: basic and acidic residues; the sequence is AHDHGHAHDHDHGHAHDHGH. Positions 111 to 120 are enriched in basic residues; that stretch reads HGHAHDHHGH. Residues 121–132 show a composition bias toward basic and acidic residues; the sequence is SHEDHGHSHGAE. A helical membrane pass occupies residues 161–181; it reads AISATLLISAAPCFILMFIPI. N-linked (GlcNAc...) asparagine glycosylation is present at N184. Residues 194 to 214 traverse the membrane as a helical segment; the sequence is VLLAFGSGGLLGDAFLHLIPH. The tract at residues 219-239 is disordered; it reads GDGHGHSHSHGHSHGGGGHSH. The chain crosses the membrane as a helical span at residues 244-264; sequence MSVGGWVLGGIIAFLTVEKLV. Residues 270 to 307 are disordered; that stretch reads EDGHGHSHGHSHGGEKKETKEKDSKDKVAKKEEKPEKD. Residues 281 to 307 show a composition bias toward basic and acidic residues; it reads HGGEKKETKEKDSKDKVAKKEEKPEKD. An N-linked (GlcNAc...) asparagine glycan is attached at N326. The next 3 helical transmembrane spans lie at 333-353, 376-396, and 410-430; these read IGASFIAGTTVGIVTMITVLV, AMLIQLVTALGALSGCVISLF, and SWVLPFTAGGFIYIATVSVIP. N435 carries N-linked (GlcNAc...) asparagine glycosylation. A helical membrane pass occupies residues 441–461; the sequence is TVKEIFAILTGIFLMYLIAIY.

Belongs to the ZIP transporter (TC 2.A.5) family. KE4/Catsup subfamily. As to expression, expressed in somatic tissues.

Its subcellular location is the membrane. Its function is as follows. Zinc transporter. In Caenorhabditis elegans, this protein is Zinc transporter zipt-7.2.